An 834-amino-acid polypeptide reads, in one-letter code: Leucine--tRNA ligase (834 aa).

The short motif at 42–52 (PYPSGKLHMGH) is the 'HIGH' region element. The 'KMSKS' region signature appears at 619 to 623 (KMSKS). Lys-622 is an ATP binding site.

This sequence belongs to the class-I aminoacyl-tRNA synthetase family.

It is found in the cytoplasm. The enzyme catalyses tRNA(Leu) + L-leucine + ATP = L-leucyl-tRNA(Leu) + AMP + diphosphate. The sequence is that of Leucine--tRNA ligase from Actinobacillus pleuropneumoniae serotype 7 (strain AP76).